Reading from the N-terminus, the 123-residue chain is Small ribosomal subunit protein uS12 (123 aa).

Residue D89 is modified to 3-methylthioaspartic acid.

Belongs to the universal ribosomal protein uS12 family. Part of the 30S ribosomal subunit. Contacts proteins S8 and S17. May interact with IF1 in the 30S initiation complex.

Functionally, with S4 and S5 plays an important role in translational accuracy. In terms of biological role, interacts with and stabilizes bases of the 16S rRNA that are involved in tRNA selection in the A site and with the mRNA backbone. Located at the interface of the 30S and 50S subunits, it traverses the body of the 30S subunit contacting proteins on the other side and probably holding the rRNA structure together. The combined cluster of proteins S8, S12 and S17 appears to hold together the shoulder and platform of the 30S subunit. This chain is Small ribosomal subunit protein uS12, found in Chelativorans sp. (strain BNC1).